We begin with the raw amino-acid sequence, 133 residues long: Holo-[acyl-carrier-protein] synthase (133 aa).

Mg(2+) is bound by residues D8 and E58.

The protein belongs to the P-Pant transferase superfamily. AcpS family. Requires Mg(2+) as cofactor.

It localises to the cytoplasm. It catalyses the reaction apo-[ACP] + CoA = holo-[ACP] + adenosine 3',5'-bisphosphate + H(+). In terms of biological role, transfers the 4'-phosphopantetheine moiety from coenzyme A to a Ser of acyl-carrier-protein. In Sphingopyxis alaskensis (strain DSM 13593 / LMG 18877 / RB2256) (Sphingomonas alaskensis), this protein is Holo-[acyl-carrier-protein] synthase.